The chain runs to 378 residues: Chaperone protein DnaJ (378 aa).

The J domain occupies 5–70 (DFYEILGVSK…EKRSAYDRMG (66 aa)). The segment at 137–215 (GCKKEISFTA…CHGNGVKDKS (79 aa)) adopts a CR-type zinc-finger fold. Residues Cys-150, Cys-153, Cys-167, Cys-170, Cys-189, Cys-192, Cys-203, and Cys-206 each contribute to the Zn(2+) site. CXXCXGXG motif repeat units follow at residues 150–157 (CDTCDGKG), 167–174 (CQTCHGQG), 189–196 (CPHCGGTG), and 203–210 (CSDCHGNG).

Belongs to the DnaJ family. Homodimer. Requires Zn(2+) as cofactor.

The protein resides in the cytoplasm. In terms of biological role, participates actively in the response to hyperosmotic and heat shock by preventing the aggregation of stress-denatured proteins and by disaggregating proteins, also in an autonomous, DnaK-independent fashion. Unfolded proteins bind initially to DnaJ; upon interaction with the DnaJ-bound protein, DnaK hydrolyzes its bound ATP, resulting in the formation of a stable complex. GrpE releases ADP from DnaK; ATP binding to DnaK triggers the release of the substrate protein, thus completing the reaction cycle. Several rounds of ATP-dependent interactions between DnaJ, DnaK and GrpE are required for fully efficient folding. Also involved, together with DnaK and GrpE, in the DNA replication of plasmids through activation of initiation proteins. This chain is Chaperone protein DnaJ, found in Psychrobacter cryohalolentis (strain ATCC BAA-1226 / DSM 17306 / VKM B-2378 / K5).